The sequence spans 75 residues: Sec-independent protein translocase protein TatA (75 aa).

Residues 1-21 traverse the membrane as a helical segment; it reads MGSFSIWHWLIVLVIVVLVFG. 2 stretches are compositionally biased toward basic and acidic residues: residues 43-54 and 66-75; these read MRDSEKSGEDVQ and ATDKSHTVSH. Residues 43 to 75 are disordered; it reads MRDSEKSGEDVQQKIGGDTLDAQATDKSHTVSH.

This sequence belongs to the TatA/E family. In terms of assembly, the Tat system comprises two distinct complexes: a TatABC complex, containing multiple copies of TatA, TatB and TatC subunits, and a separate TatA complex, containing only TatA subunits. Substrates initially bind to the TatABC complex, which probably triggers association of the separate TatA complex to form the active translocon.

The protein resides in the cell inner membrane. Part of the twin-arginine translocation (Tat) system that transports large folded proteins containing a characteristic twin-arginine motif in their signal peptide across membranes. TatA could form the protein-conducting channel of the Tat system. This Aromatoleum aromaticum (strain DSM 19018 / LMG 30748 / EbN1) (Azoarcus sp. (strain EbN1)) protein is Sec-independent protein translocase protein TatA.